The following is a 142-amino-acid chain: Large ribosomal subunit protein uL13 (142 aa).

Belongs to the universal ribosomal protein uL13 family. As to quaternary structure, part of the 50S ribosomal subunit.

Its function is as follows. This protein is one of the early assembly proteins of the 50S ribosomal subunit, although it is not seen to bind rRNA by itself. It is important during the early stages of 50S assembly. This is Large ribosomal subunit protein uL13 from Xanthomonas campestris pv. campestris (strain ATCC 33913 / DSM 3586 / NCPPB 528 / LMG 568 / P 25).